The sequence spans 504 residues: ATP synthase subunit alpha (504 aa).

169–176 (GDRGTGKT) serves as a coordination point for ATP.

It belongs to the ATPase alpha/beta chains family. In terms of assembly, F-type ATPases have 2 components, CF(1) - the catalytic core - and CF(0) - the membrane proton channel. CF(1) has five subunits: alpha(3), beta(3), gamma(1), delta(1), epsilon(1). CF(0) has three main subunits: a(1), b(2) and c(9-12). The alpha and beta chains form an alternating ring which encloses part of the gamma chain. CF(1) is attached to CF(0) by a central stalk formed by the gamma and epsilon chains, while a peripheral stalk is formed by the delta and b chains.

The protein localises to the cell inner membrane. It catalyses the reaction ATP + H2O + 4 H(+)(in) = ADP + phosphate + 5 H(+)(out). Its function is as follows. Produces ATP from ADP in the presence of a proton gradient across the membrane. The alpha chain is a regulatory subunit. This Leptospira biflexa serovar Patoc (strain Patoc 1 / Ames) protein is ATP synthase subunit alpha.